A 272-amino-acid polypeptide reads, in one-letter code: Methyl-CpG-binding domain-containing protein 2 (272 aa).

Over residues 1–15 (MSMSQSRAVQRSSSP) the composition is skewed to polar residues. The interval 1–24 (MSMSQSRAVQRSSSPNEDRGENQL) is disordered. Residues 53–112 (CPSIGAFTVQCASCFKWRLMPSMQKYEEIREQLLENPFFCDTAREWKPDISCDVPADIYQ) form a CW-type zinc finger. An MBD-associated domain (MAD) motif is present at residues 62-104 (QCASCFKWRLMPSMQKYEEIREQLLENPFFCDTAREWKPDISC). Positions 63, 66, 92, and 104 each coordinate Zn(2+). Residues 118–192 (WAIDKPNISR…SQFSFQIPKP (75 aa)) enclose the MBD domain. A compositionally biased stretch (polar residues) spans 236–250 (LGTPTESGLNNSHYQ). The tract at residues 236-272 (LGTPTESGLNNSHYQPSKKKKTSTLSIFGSNDELADR) is disordered.

In terms of assembly, interacts (via MBD domain) with DDM1. As to expression, expressed in buds, flowers, stems, siliques and mature seeds.

The protein resides in the nucleus. Functionally, probable transcriptional regulator. This chain is Methyl-CpG-binding domain-containing protein 2 (MBD2), found in Arabidopsis thaliana (Mouse-ear cress).